The primary structure comprises 217 residues: Nucleoside diphosphate-linked moiety X motif 6 (217 aa).

The Nudix hydrolase domain occupies 42–177 (THQVGVAGAV…VAKLLLYGYN (136 aa)). The Nudix box signature appears at 77–98 (GLSDQGEDIGATAVREVLEETG).

This sequence belongs to the Nudix hydrolase family. In terms of tissue distribution, detected in liver (at protein level).

It is found in the cytoplasm. It localises to the nucleus. The protein resides in the mitochondrion. In terms of biological role, may contribute to the regulation of cell proliferation. This is Nucleoside diphosphate-linked moiety X motif 6 (nudt6) from Xenopus laevis (African clawed frog).